We begin with the raw amino-acid sequence, 295 residues long: MHKLLLIITVFSTFNVAQASLTSIVASVNDKPITFNEFHARKKMIMVLNNVENLTSDQDKQLSDLAINSLIDESLLFQYAGDREIQQDEIDNAIKSIEDRNKMPHGSLLQYLKNKSVNPESFIFQIKSELIKMNILSSLSRSVQVSNKEIDVAILSSDQKDVEILMQVFRSKDGSNKAFTKMNYLKNRLKKCSDVKKTLYDKFATMQLITSKLSKLGGVKQTIVKDLIPDKASNVFEVNNKFEIILVCSKKILNVTVDENNYVVNFLTNKKISQKAQKIFKNMRKKAAITIMFPS.

A signal peptide spans 1–19; sequence MHKLLLIITVFSTFNVAQA.

This is an uncharacterized protein from Rickettsia typhi (strain ATCC VR-144 / Wilmington).